We begin with the raw amino-acid sequence, 369 residues long: Protein-glutamate methylesterase/protein-glutamine glutaminase (369 aa).

The Response regulatory domain occupies 6–122; it reads RAVVADDSHF…SMEMSRLKDQ (117 aa). Aspartate 56 bears the 4-aspartylphosphate mark. The tract at residues 136–178 is disordered; the sequence is GATGSRSGTGSDSGTAPTTAGGSATDRRGTGGSSGQTTYVANP. Positions 138–159 are enriched in low complexity; that stretch reads TGSRSGTGSDSGTAPTTAGGSA. The CheB-type methylesterase domain maps to 173–367; that stretch reads TYVANPTLVI…DGVIDTITTE (195 aa). Catalysis depends on residues serine 185, histidine 212, and aspartate 309.

Belongs to the CheB family. Phosphorylated by CheA. Phosphorylation of the N-terminal regulatory domain activates the methylesterase activity.

The protein localises to the cytoplasm. It carries out the reaction [protein]-L-glutamate 5-O-methyl ester + H2O = L-glutamyl-[protein] + methanol + H(+). The enzyme catalyses L-glutaminyl-[protein] + H2O = L-glutamyl-[protein] + NH4(+). Functionally, involved in chemotaxis. Part of a chemotaxis signal transduction system that modulates chemotaxis in response to various stimuli. Catalyzes the demethylation of specific methylglutamate residues introduced into the chemoreceptors (methyl-accepting chemotaxis proteins or MCP) by CheR. Also mediates the irreversible deamidation of specific glutamine residues to glutamic acid. This chain is Protein-glutamate methylesterase/protein-glutamine glutaminase, found in Haloarcula marismortui (strain ATCC 43049 / DSM 3752 / JCM 8966 / VKM B-1809) (Halobacterium marismortui).